The sequence spans 155 residues: Ribonuclease H (155 aa).

Residues 7–150 (AQNAVDLYTD…ADKLACKGRD (144 aa)) form the RNase H type-1 domain. Positions 16, 54, 77, and 142 each coordinate Mg(2+).

This sequence belongs to the RNase H family. As to quaternary structure, monomer. Mg(2+) is required as a cofactor.

It is found in the cytoplasm. It carries out the reaction Endonucleolytic cleavage to 5'-phosphomonoester.. Functionally, endonuclease that specifically degrades the RNA of RNA-DNA hybrids. This Saccharopolyspora erythraea (strain ATCC 11635 / DSM 40517 / JCM 4748 / NBRC 13426 / NCIMB 8594 / NRRL 2338) protein is Ribonuclease H.